The following is a 470-amino-acid chain: Regulator of microtubule dynamics protein 3 (470 aa).

At 1 to 12 the chain is on the mitochondrial intermembrane side; that stretch reads MSRLGALGGSRA. The chain crosses the membrane as a helical span at residues 13–35; sequence GLGLLLGTAAGLGFLCVLYSQRW. Residues 36–470 are Cytoplasmic-facing; sequence KRTQRHGRSH…DLEELEVILG (435 aa). A phosphoserine mark is found at serine 44, serine 46, serine 50, and serine 57. A coiled-coil region spans residues 91 to 125; sequence LDRLDFVLTSLMALRREVEELQRSLQGLAGEIVGE. An FFAT motif is present at residues 157–163; the sequence is VYFTASS. Position 160 is a phosphothreonine (threonine 160). Positions 168 to 205 are disordered; sequence TDAESEGGYTTANAESDYERDSDKESGDAEDEVSCETV. Residues serine 183, serine 193, serine 212, and serine 233 each carry the phosphoserine modification. A compositionally biased stretch (basic and acidic residues) spans 184–194; sequence DYERDSDKESG.

Belongs to the RMDN family. Interacts with PTPN2. Interacts with microtubules. Interacts with VAPB. Interacts (via FFAT motif) with MOSPD2 (via MSP domain). Interacts (via phosphorylated FFAT motif) with MOSPD2, VAPA and VAPB. Phosphorylation at Thr-160 of the FFAT motif activates interaction with MOSPD2, VAPA and VAPB.

Its subcellular location is the mitochondrion outer membrane. It is found in the cytoplasm. It localises to the nucleus. The protein localises to the cytoskeleton. The protein resides in the spindle. Its subcellular location is the spindle pole. Functionally, involved in cellular calcium homeostasis regulation. May participate in differentiation and apoptosis of keratinocytes. Overexpression induces apoptosis. The polypeptide is Regulator of microtubule dynamics protein 3 (Mus musculus (Mouse)).